A 156-amino-acid chain; its full sequence is Protein-export protein SecB (156 aa).

Belongs to the SecB family. As to quaternary structure, homotetramer, a dimer of dimers. One homotetramer interacts with 1 SecA dimer.

Its subcellular location is the cytoplasm. In terms of biological role, one of the proteins required for the normal export of preproteins out of the cell cytoplasm. It is a molecular chaperone that binds to a subset of precursor proteins, maintaining them in a translocation-competent state. It also specifically binds to its receptor SecA. In Aliivibrio fischeri (strain ATCC 700601 / ES114) (Vibrio fischeri), this protein is Protein-export protein SecB.